A 561-amino-acid polypeptide reads, in one-letter code: Putative transport protein YbjL (561 aa).

5 helical membrane-spanning segments follow: residues 8–28, 32–52, 66–86, 94–114, and 158–178; these read LLNGNYILLLFVVLALGLCLG, LGSIQLGNSIGVLVVSLLLGQ, FMLFIFCVGVEAGPNFFSIFF, MLALVMVGSALVIALGLGKLF, and NLSLGYALTYLIGLVSLIVGA. RCK C-terminal domains are found at residues 200-288 and 292-373; these read RGLD…SFRN and VFDR…RIGF. 5 helical membrane-spanning segments follow: residues 383-403, 406-426, 451-471, 475-495, and 540-560; these read LLAFCAFFVIGLMIGMITFQF, FSFGMGNAAGLLFAGIMLGFM, VFMAGVGLSAGSGINNGLGAI, MLIAGLIVSLVPVVICFLFGA, and AIANVLLTLAGTIIVMVWPGL.

It belongs to the AAE transporter (TC 2.A.81) family. YbjL subfamily.

The protein resides in the cell membrane. This Escherichia coli O127:H6 (strain E2348/69 / EPEC) protein is Putative transport protein YbjL.